The sequence spans 210 residues: Large ribosomal subunit protein uL3 (210 aa).

At Gln151 the chain carries N5-methylglutamine.

This sequence belongs to the universal ribosomal protein uL3 family. In terms of assembly, part of the 50S ribosomal subunit. Forms a cluster with proteins L14 and L19. In terms of processing, methylated by PrmB.

Its function is as follows. One of the primary rRNA binding proteins, it binds directly near the 3'-end of the 23S rRNA, where it nucleates assembly of the 50S subunit. In Aeromonas hydrophila subsp. hydrophila (strain ATCC 7966 / DSM 30187 / BCRC 13018 / CCUG 14551 / JCM 1027 / KCTC 2358 / NCIMB 9240 / NCTC 8049), this protein is Large ribosomal subunit protein uL3.